Reading from the N-terminus, the 138-residue chain is Translation initiation factor 5A (138 aa).

K37 carries the hypusine modification.

The protein belongs to the eIF-5A family.

The protein resides in the cytoplasm. In terms of biological role, functions by promoting the formation of the first peptide bond. This Pyrococcus furiosus (strain ATCC 43587 / DSM 3638 / JCM 8422 / Vc1) protein is Translation initiation factor 5A.